Reading from the N-terminus, the 268-residue chain is L-aspartate dehydrogenase (268 aa).

Residues alanine 125 and asparagine 191 each coordinate NAD(+). Histidine 221 is an active-site residue.

The protein belongs to the L-aspartate dehydrogenase family.

It carries out the reaction L-aspartate + NADP(+) + H2O = oxaloacetate + NH4(+) + NADPH + H(+). The catalysed reaction is L-aspartate + NAD(+) + H2O = oxaloacetate + NH4(+) + NADH + H(+). It participates in cofactor biosynthesis; NAD(+) biosynthesis; iminoaspartate from L-aspartate (dehydrogenase route): step 1/1. Its function is as follows. Specifically catalyzes the NAD or NADP-dependent dehydrogenation of L-aspartate to iminoaspartate. The protein is L-aspartate dehydrogenase of Brucella anthropi (strain ATCC 49188 / DSM 6882 / CCUG 24695 / JCM 21032 / LMG 3331 / NBRC 15819 / NCTC 12168 / Alc 37) (Ochrobactrum anthropi).